A 1005-amino-acid chain; its full sequence is Beta-galactosidase (1005 aa).

Residue Glu-455 is the Proton donor of the active site. Glu-526 serves as the catalytic Nucleophile.

The protein belongs to the glycosyl hydrolase 2 family.

The enzyme catalyses Hydrolysis of terminal non-reducing beta-D-galactose residues in beta-D-galactosides.. This Actinobacillus pleuropneumoniae (Haemophilus pleuropneumoniae) protein is Beta-galactosidase (lacZ).